The sequence spans 104 residues: UPF0235 protein MTH_637 (104 aa).

This sequence belongs to the UPF0235 family.

The sequence is that of UPF0235 protein MTH_637 from Methanothermobacter thermautotrophicus (strain ATCC 29096 / DSM 1053 / JCM 10044 / NBRC 100330 / Delta H) (Methanobacterium thermoautotrophicum).